We begin with the raw amino-acid sequence, 292 residues long: Protein LRATD1 (292 aa).

The residue at position 38 (serine 38) is a Phosphoserine. The LRAT domain maps to 133–228 (PATEQPAPAP…CRFGKREFKA (96 aa)).

Belongs to the LRATD family.

Its subcellular location is the cytoplasm. Functionally, may play a role in cell morphology and motility. The chain is Protein LRATD1 from Mus musculus (Mouse).